A 294-amino-acid polypeptide reads, in one-letter code: N-acetylmuramic acid 6-phosphate etherase (294 aa).

The 164-residue stretch at 56–219 (TSYSLRNGGR…STLSMVSVGK (164 aa)) folds into the SIS domain. Glutamate 84 serves as the catalytic Proton donor. The active site involves glutamate 115.

It belongs to the GCKR-like family. MurNAc-6-P etherase subfamily. As to quaternary structure, homodimer.

The enzyme catalyses N-acetyl-D-muramate 6-phosphate + H2O = N-acetyl-D-glucosamine 6-phosphate + (R)-lactate. Its pathway is amino-sugar metabolism; 1,6-anhydro-N-acetylmuramate degradation. It participates in amino-sugar metabolism; N-acetylmuramate degradation. It functions in the pathway cell wall biogenesis; peptidoglycan recycling. Specifically catalyzes the cleavage of the D-lactyl ether substituent of MurNAc 6-phosphate, producing GlcNAc 6-phosphate and D-lactate. Together with AnmK, is also required for the utilization of anhydro-N-acetylmuramic acid (anhMurNAc) either imported from the medium or derived from its own cell wall murein, and thus plays a role in cell wall recycling. In Francisella tularensis subsp. tularensis (strain SCHU S4 / Schu 4), this protein is N-acetylmuramic acid 6-phosphate etherase.